The primary structure comprises 779 residues: Phosphoribosylformylglycinamidine synthase subunit PurL (779 aa).

His52 is a catalytic residue. ATP-binding residues include Tyr55 and Lys94. Glu96 is a Mg(2+) binding site. Substrate is bound by residues 97–100 and Arg119; that span reads SHNH. His98 acts as the Proton acceptor in catalysis. A Mg(2+)-binding site is contributed by Asp120. Gln243 provides a ligand contact to substrate. Residue Asp271 participates in Mg(2+) binding. 315-317 is a binding site for substrate; the sequence is ESQ. ATP-binding residues include Asn523 and Gly560. Asn561 contributes to the Mg(2+) binding site. Ser563 is a binding site for substrate.

This sequence belongs to the FGAMS family. As to quaternary structure, monomer. Part of the FGAM synthase complex composed of 1 PurL, 1 PurQ and 2 PurS subunits.

Its subcellular location is the cytoplasm. The catalysed reaction is N(2)-formyl-N(1)-(5-phospho-beta-D-ribosyl)glycinamide + L-glutamine + ATP + H2O = 2-formamido-N(1)-(5-O-phospho-beta-D-ribosyl)acetamidine + L-glutamate + ADP + phosphate + H(+). The protein operates within purine metabolism; IMP biosynthesis via de novo pathway; 5-amino-1-(5-phospho-D-ribosyl)imidazole from N(2)-formyl-N(1)-(5-phospho-D-ribosyl)glycinamide: step 1/2. Its function is as follows. Part of the phosphoribosylformylglycinamidine synthase complex involved in the purines biosynthetic pathway. Catalyzes the ATP-dependent conversion of formylglycinamide ribonucleotide (FGAR) and glutamine to yield formylglycinamidine ribonucleotide (FGAM) and glutamate. The FGAM synthase complex is composed of three subunits. PurQ produces an ammonia molecule by converting glutamine to glutamate. PurL transfers the ammonia molecule to FGAR to form FGAM in an ATP-dependent manner. PurS interacts with PurQ and PurL and is thought to assist in the transfer of the ammonia molecule from PurQ to PurL. This Prochlorococcus marinus (strain MIT 9215) protein is Phosphoribosylformylglycinamidine synthase subunit PurL.